Consider the following 132-residue polypeptide: Small ribosomal subunit protein uS8 (132 aa).

The protein belongs to the universal ribosomal protein uS8 family. In terms of assembly, part of the 30S ribosomal subunit. Contacts proteins S5 and S12.

One of the primary rRNA binding proteins, it binds directly to 16S rRNA central domain where it helps coordinate assembly of the platform of the 30S subunit. This Streptococcus pneumoniae serotype 19F (strain G54) protein is Small ribosomal subunit protein uS8.